The chain runs to 253 residues: Triosephosphate isomerase (253 aa).

15–17 (NWK) contributes to the substrate binding site. The active-site Electrophile is histidine 101. The active-site Proton acceptor is the glutamate 171. Residues glycine 177, serine 216, and 237 to 238 (GG) each bind substrate.

The protein belongs to the triosephosphate isomerase family. In terms of assembly, homodimer.

It is found in the cytoplasm. It carries out the reaction D-glyceraldehyde 3-phosphate = dihydroxyacetone phosphate. Its pathway is carbohydrate biosynthesis; gluconeogenesis. It functions in the pathway carbohydrate degradation; glycolysis; D-glyceraldehyde 3-phosphate from glycerone phosphate: step 1/1. Its function is as follows. Involved in the gluconeogenesis. Catalyzes stereospecifically the conversion of dihydroxyacetone phosphate (DHAP) to D-glyceraldehyde-3-phosphate (G3P). The sequence is that of Triosephosphate isomerase from Caulobacter vibrioides (strain ATCC 19089 / CIP 103742 / CB 15) (Caulobacter crescentus).